The following is a 413-amino-acid chain: Multifunctional CCA protein (413 aa).

Gly8 and Arg11 together coordinate ATP. Residues Gly8 and Arg11 each coordinate CTP. Residues Asp21 and Asp23 each contribute to the Mg(2+) site. ATP-binding residues include Arg91, Arg143, and Arg146. 3 residues coordinate CTP: Arg91, Arg143, and Arg146. The 102-residue stretch at Thr232–Leu333 folds into the HD domain.

The protein belongs to the tRNA nucleotidyltransferase/poly(A) polymerase family. Bacterial CCA-adding enzyme type 1 subfamily. Monomer. Can also form homodimers and oligomers. Mg(2+) is required as a cofactor. It depends on Ni(2+) as a cofactor.

The enzyme catalyses a tRNA precursor + 2 CTP + ATP = a tRNA with a 3' CCA end + 3 diphosphate. It catalyses the reaction a tRNA with a 3' CCA end + 2 CTP + ATP = a tRNA with a 3' CCACCA end + 3 diphosphate. Functionally, catalyzes the addition and repair of the essential 3'-terminal CCA sequence in tRNAs without using a nucleic acid template. Adds these three nucleotides in the order of C, C, and A to the tRNA nucleotide-73, using CTP and ATP as substrates and producing inorganic pyrophosphate. tRNA 3'-terminal CCA addition is required both for tRNA processing and repair. Also involved in tRNA surveillance by mediating tandem CCA addition to generate a CCACCA at the 3' terminus of unstable tRNAs. While stable tRNAs receive only 3'-terminal CCA, unstable tRNAs are marked with CCACCA and rapidly degraded. The chain is Multifunctional CCA protein from Burkholderia multivorans (strain ATCC 17616 / 249).